The primary structure comprises 205 residues: Molybdenum cofactor guanylyltransferase (205 aa).

GTP is bound by residues 14 to 16, Lys27, Asp77, and Asp107; that span reads LAG. Asp107 lines the Mg(2+) pocket.

This sequence belongs to the MobA family. As to quaternary structure, monomer. It depends on Mg(2+) as a cofactor.

The protein resides in the cytoplasm. It carries out the reaction Mo-molybdopterin + GTP + H(+) = Mo-molybdopterin guanine dinucleotide + diphosphate. Its function is as follows. Transfers a GMP moiety from GTP to Mo-molybdopterin (Mo-MPT) cofactor (Moco or molybdenum cofactor) to form Mo-molybdopterin guanine dinucleotide (Mo-MGD) cofactor. The chain is Molybdenum cofactor guanylyltransferase from Burkholderia lata (strain ATCC 17760 / DSM 23089 / LMG 22485 / NCIMB 9086 / R18194 / 383).